The chain runs to 371 residues: Protease PrtS (371 aa).

Position 169 (His169) interacts with Zn(2+). Glu170 is an active-site residue. Zn(2+) is bound by residues His173 and Glu193. The Proton donor role is filled by His273. The segment at 352–371 is disordered; it reads KEEDKDKGKDEGKDKAETKV.

It belongs to the peptidase M4 family. Zn(2+) is required as a cofactor.

The protein localises to the secreted. With respect to regulation, inhibited by 8 mM 1,10-phenanthroline, but not by EDTA or PMSF. Its function is as follows. Metalloprotease involved in the inhibition of insect antibacterial peptides. Reduces the antibacterial activity of G.mellonella hemolymph by 50%. Reduces the antibacterial activity of cecropin A by 80% and completely inhibits cecropin B. This chain is Protease PrtS, found in Photorhabdus sp. (strain Az29).